Reading from the N-terminus, the 361-residue chain is Chorismate synthase (361 aa).

NADP(+) is bound by residues Arg-48 and Arg-54. FMN-binding positions include 125 to 127, 238 to 239, Gly-278, 293 to 297, and Arg-319; these read RSS, NA, and KPTSS.

The protein belongs to the chorismate synthase family. In terms of assembly, homotetramer. The cofactor is FMNH2.

The enzyme catalyses 5-O-(1-carboxyvinyl)-3-phosphoshikimate = chorismate + phosphate. The protein operates within metabolic intermediate biosynthesis; chorismate biosynthesis; chorismate from D-erythrose 4-phosphate and phosphoenolpyruvate: step 7/7. Its function is as follows. Catalyzes the anti-1,4-elimination of the C-3 phosphate and the C-6 proR hydrogen from 5-enolpyruvylshikimate-3-phosphate (EPSP) to yield chorismate, which is the branch point compound that serves as the starting substrate for the three terminal pathways of aromatic amino acid biosynthesis. This reaction introduces a second double bond into the aromatic ring system. This is Chorismate synthase from Escherichia coli O7:K1 (strain IAI39 / ExPEC).